Reading from the N-terminus, the 803-residue chain is MutS protein homolog 4 (803 aa).

Position 557-564 (557-564 (GANMSGKS)) interacts with ATP.

Belongs to the DNA mismatch repair MutS family. In terms of assembly, heterooligomer of MSH4 and MSH5.

Functionally, involved in meiotic recombination. Facilitate crossovers between homologs during meiosis. This is MutS protein homolog 4 (MSH4) from Candida albicans (Yeast).